The primary structure comprises 820 residues: Leucine--tRNA ligase (820 aa).

Positions 42-52 (PYPSGDLHMGH) match the 'HIGH' region motif. A 'KMSKS' region motif is present at residues 576–580 (KMSKS). K579 contributes to the ATP binding site.

Belongs to the class-I aminoacyl-tRNA synthetase family.

It is found in the cytoplasm. The enzyme catalyses tRNA(Leu) + L-leucine + ATP = L-leucyl-tRNA(Leu) + AMP + diphosphate. This chain is Leucine--tRNA ligase, found in Coxiella burnetii (strain CbuK_Q154) (Coxiella burnetii (strain Q154)).